A 471-amino-acid polypeptide reads, in one-letter code: Adenosylhomocysteinase (471 aa).

Positions 58, 133, and 195 each coordinate substrate. 196–198 is a binding site for NAD(+); it reads TTT. Residues Lys225 and Asp229 each contribute to the substrate site. NAD(+) is bound by residues Asn230, 259 to 264, Glu282, Asn317, 338 to 340, and Asn383; these read GFGDVG and IGH.

Belongs to the adenosylhomocysteinase family. NAD(+) is required as a cofactor.

It is found in the cytoplasm. It carries out the reaction S-adenosyl-L-homocysteine + H2O = L-homocysteine + adenosine. The protein operates within amino-acid biosynthesis; L-homocysteine biosynthesis; L-homocysteine from S-adenosyl-L-homocysteine: step 1/1. In terms of biological role, may play a key role in the regulation of the intracellular concentration of adenosylhomocysteine. The chain is Adenosylhomocysteinase from Rhodopseudomonas palustris (strain BisB5).